Consider the following 508-residue polypeptide: Maturase K (508 aa).

It belongs to the intron maturase 2 family. MatK subfamily.

It is found in the plastid. Its subcellular location is the chloroplast. In terms of biological role, usually encoded in the trnK tRNA gene intron. Probably assists in splicing its own and other chloroplast group II introns. This is Maturase K from Abrus precatorius (Indian licorice).